A 200-amino-acid polypeptide reads, in one-letter code: Gene 55 protein (200 aa).

Cys8 carries S-palmitoyl cysteine; by host lipidation.

It belongs to the herpesviridae UL51 family. Oligomerizes. Interacts with ORF42; this interaction mediates ORF42 incorporation to virions. Post-translationally, phosphorylated. In terms of processing, palmitoylation is necessary for Golgi localization.

The protein resides in the virion tegument. It is found in the host cytoplasm. The protein localises to the host Golgi apparatus. Functionally, plays several roles during the time course of infection, including egress of virus particles from the perinuclear space and secondary envelopment of cytoplasmic capsids that bud into specific trans-Golgi network (TGN)-derived membranes. The polypeptide is Gene 55 protein (55) (Saimiriine herpesvirus 2 (strain 11) (SaHV-2)).